Here is a 225-residue protein sequence, read N- to C-terminus: Glutathione S-transferase Mu 5 (225 aa).

Residues 5–92 (KSMVLGYWDI…YIARKHNMCG (88 aa)) form the GST N-terminal domain. The residue at position 6 (Ser6) is a Phosphoserine. Glutathione-binding positions include 11–12 (YW), 50–54 (WLDVK), 63–64 (NL), and 76–77 (QS). The region spanning 94–212 (TEEEKIRVDI…QSDRCFKMPI (119 aa)) is the GST C-terminal domain. A substrate-binding site is contributed by Tyr120.

Belongs to the GST superfamily. Mu family. In terms of assembly, homodimer. Post-translationally, the N-terminus is blocked. As to expression, expressed in testis and brain. Very low expression in liver, kidney, heart and lung.

The protein localises to the cytoplasm. The enzyme catalyses RX + glutathione = an S-substituted glutathione + a halide anion + H(+). In terms of biological role, conjugation of reduced glutathione to a wide number of exogenous and endogenous hydrophobic electrophiles. This chain is Glutathione S-transferase Mu 5 (Gstm5), found in Rattus norvegicus (Rat).